A 124-amino-acid polypeptide reads, in one-letter code: UPF0538 protein (124 aa).

Belongs to the UPF0538 family.

This Dictyostelium discoideum (Social amoeba) protein is UPF0538 protein.